The chain runs to 450 residues: 23S rRNA (uracil(1939)-C(5))-methyltransferase RlmD (450 aa).

The 59-residue stretch at lysine 15 to arginine 73 folds into the TRAM domain. [4Fe-4S] cluster contacts are provided by cysteine 86, cysteine 92, cysteine 95, and cysteine 173. Residues glutamine 276, phenylalanine 305, asparagine 310, glutamate 326, asparagine 353, and aspartate 374 each contribute to the S-adenosyl-L-methionine site. The active-site Nucleophile is the cysteine 400.

This sequence belongs to the class I-like SAM-binding methyltransferase superfamily. RNA M5U methyltransferase family. RlmD subfamily.

It carries out the reaction uridine(1939) in 23S rRNA + S-adenosyl-L-methionine = 5-methyluridine(1939) in 23S rRNA + S-adenosyl-L-homocysteine + H(+). Functionally, catalyzes the formation of 5-methyl-uridine at position 1939 (m5U1939) in 23S rRNA. The sequence is that of 23S rRNA (uracil(1939)-C(5))-methyltransferase RlmD from Pectobacterium atrosepticum (strain SCRI 1043 / ATCC BAA-672) (Erwinia carotovora subsp. atroseptica).